A 358-amino-acid chain; its full sequence is WAT1-related protein At3g28080 (358 aa).

Helical transmembrane passes span 12–32 (AVFL…STLF), 42–62 (IYPF…PSLF), 81–101 (IGLL…GIEY), 105–125 (TLAS…AVIF), 137–157 (SVAK…VIFY), 187–207 (WLIG…SFIL), 219–239 (FTVS…IGLV), 245–265 (PSIW…TGII), 283–303 (LYLA…GTIF), and 308–328 (LYLG…VVMW). The region spanning 27–155 (GLSTLFKVAT…LSLIGAFVVI (129 aa)) is the EamA domain.

The protein belongs to the drug/metabolite transporter (DMT) superfamily. Plant drug/metabolite exporter (P-DME) (TC 2.A.7.4) family.

The protein resides in the membrane. This is WAT1-related protein At3g28080 from Arabidopsis thaliana (Mouse-ear cress).